Here is a 508-residue protein sequence, read N- to C-terminus: MILVLDFGSQYTQLIARRLRESGIYTEIVPFFESIENIQKKAPKGLILSGGPASVYAKDAYKPSGKIFDLNVPILGICYGMQYLVDFFGGVVVGANEQEFGKAVLEIAQNSVIFEGVKIKSLVWMSHMDKVIELPKGFTTLAKSPNSPHCAIENGKIFGLQFHPEVVQSEEGGKILENFALLVCGCEKTWGMQHFAQREIARLKEKIANAKVLCAVSGGVDSTVVATLLHRAIKDNLIAVFVDHGLLRKNEKERVQAMFKDLQIPLNTIDAKGIFLSKLKGVSEPELKRKIIGETFIEVFEKEAKKHHLKGKIEFLAQGTLYPDVIESVSVKGPSKVIKTHHNVGGLPEWMDFKLIEPLRELFKDEARLLGKELGVSQDFLMHHPFPGPGLAVRILGEVSESKIKRLQEADFIFIEELKKANLYDKVWQAFCVLLNVNSVGVMGDNRTYENAICLRAVNASDGMTASFSFLEHSFLEKVSNRITNEVSGINRVVYDITSKPPGTIEWE.

The region spanning Met-1–Thr-189 is the Glutamine amidotransferase type-1 domain. Cys-78 acts as the Nucleophile in catalysis. Residues His-163 and Glu-165 contribute to the active site. The GMPS ATP-PPase domain occupies Trp-190 to His-383. ATP is bound at residue Ser-217–Thr-223.

Homodimer.

It carries out the reaction XMP + L-glutamine + ATP + H2O = GMP + L-glutamate + AMP + diphosphate + 2 H(+). It participates in purine metabolism; GMP biosynthesis; GMP from XMP (L-Gln route): step 1/1. In terms of biological role, catalyzes the synthesis of GMP from XMP. The polypeptide is GMP synthase [glutamine-hydrolyzing] (Helicobacter pylori (strain G27)).